A 502-amino-acid chain; its full sequence is Facilitated trehalose transporter Tret1 (502 aa).

The Cytoplasmic portion of the chain corresponds to 1–38 (MGVENTKQTMSSQNIKPAKDSDDVLHTQFKEVKRSPMR). Residues 39-59 (YTMQLLAALAVSMASLMIGYS) traverse the membrane as a helical segment. Topologically, residues 60-83 (SSYTSPALVSMRDNTTATFEVTMD) are extracellular. Asparagine 73 carries N-linked (GlcNAc...) asparagine glycosylation. Residues 84–104 (MAMWIGSIMPLSALIGGIIGG) traverse the membrane as a helical segment. At 105-120 (PCIEYIGRRNTILSTA) the chain is on the cytoplasmic side. The helical transmembrane segment at 121-141 (LPFLAGWLFIALATNVAMILV) threads the bilayer. The Extracellular segment spans residues 142–144 (GRS). Residues 145–165 (ICGFCVGVASLSLPVYLGESI) form a helical membrane-spanning segment. The Cytoplasmic segment spans residues 166–172 (QPEVRGS). Residues 173-193 (LGLLPTVFGNSGILMCFTAGM) form a helical membrane-spanning segment. Over 194–199 (YLAWRN) the chain is Extracellular. Residues 200–220 (LALLGACIPIIFLILMFLIPE) form a helical membrane-spanning segment. The Cytoplasmic segment spans residues 221–282 (TPRWYISKGK…ELFRKNHIKP (62 aa)). The helical transmembrane segment at 283 to 303 (VFISLGLMFFQQFSGINAVIF) threads the bilayer. The Extracellular portion of the chain corresponds to 304 to 319 (YTVQIFKDSGSTVDEN). An N-linked (GlcNAc...) asparagine glycan is attached at asparagine 319. Residues 320 to 340 (LSTIIVGLVNFISTFVAAMII) form a helical membrane-spanning segment. The Cytoplasmic segment spans residues 341-346 (DRLGRK). Residues 347–367 (MLLYISSILMCITLFTFGTFF) traverse the membrane as a helical segment. Residues 368–376 (YVKELMDVT) lie on the Extracellular side of the membrane. A helical transmembrane segment spans residues 377–397 (AFGWIPLMSLIVYVIGFSFGF). Residues 398 to 410 (GPIPWLMMGEILP) are Cytoplasmic-facing. Residues 411-433 (VKIRGTAASVATAFNWSCTFVVT) form a helical membrane-spanning segment. Residues 434-446 (KTYEDLVLHIGPY) are Extracellular-facing. A helical transmembrane segment spans residues 447-467 (GTFWLFGTLVAVAFIFVIICV). Residues 468 to 502 (PETRGRSLEEIERRFAGPVRRTSAIANLKPMPITI) lie on the Cytoplasmic side of the membrane.

This sequence belongs to the major facilitator superfamily. Sugar transporter (TC 2.A.1.1) family. Trehalose transporter subfamily.

The protein localises to the cell membrane. In terms of biological role, moderate-capacity facilitative transporter for trehalose. Does not transport maltose, sucrose or lactose. Mediates the bidirectional transfer of trehalose. Responsible for the transport of trehalose synthesized in the fat body and the incorporation of trehalose into other tissues that require a carbon source, thereby regulating trehalose levels in the hemolymph. This chain is Facilitated trehalose transporter Tret1, found in Apis mellifera ligustica (Common honeybee).